A 463-amino-acid polypeptide reads, in one-letter code: Cysteine--tRNA ligase (463 aa).

Residue Cys-33 participates in Zn(2+) binding. A 'HIGH' region motif is present at residues 35–45 (PTVYDFAHIGN). Zn(2+) contacts are provided by Cys-221, His-246, and Glu-250. The 'KMSKS' region motif lies at 279 to 283 (KMSKS). Lys-282 provides a ligand contact to ATP.

The protein belongs to the class-I aminoacyl-tRNA synthetase family. Monomer. It depends on Zn(2+) as a cofactor.

The protein resides in the cytoplasm. It catalyses the reaction tRNA(Cys) + L-cysteine + ATP = L-cysteinyl-tRNA(Cys) + AMP + diphosphate. The sequence is that of Cysteine--tRNA ligase from Rhizobium rhizogenes (strain K84 / ATCC BAA-868) (Agrobacterium radiobacter).